The primary structure comprises 354 residues: Mating-type protein MAT-1 (354 aa).

Positions Lys60–Arg117 form a DNA-binding region, alpha box.

The protein belongs to the MATALPHA1 family.

It localises to the nucleus. Mating type proteins are sequence specific DNA-binding proteins that act as master switches in fungal differentiation by controlling gene expression in a cell type-specific fashion. Transcriptional activator that induces the transcription of alpha-specific genes. This is Mating-type protein MAT-1 (MAT1) from Cochliobolus cymbopogonis (Curvularia cymbopogonis).